We begin with the raw amino-acid sequence, 325 residues long: uncharacterized protein (325 aa).

Residue Tyr59 is the Proton donor of the active site. His117 is a substrate binding site.

Belongs to the aldo/keto reductase family.

It localises to the cytoplasm. Its subcellular location is the nucleus. This is an uncharacterized protein from Schizosaccharomyces pombe (strain 972 / ATCC 24843) (Fission yeast).